The sequence spans 1115 residues: MLRTKDLIWTLFFLGTAVSLQVDIVPSQGEISVGESKFFLCQVAGDAKDKDISWFSPNGEKLSPNQQRISVVWNDDDSSTLTIYNANIDDAGIYKCVVTAEDGTQSEATVNVKIFQKLMFKNAPTPQEFKEGEDAVIVCDVVSSLPPTIIWKHKGRDVILKKDVRFIVLSNNYLQIRGIKKTDEGTYRCEGRILARGEINFKDIQVIVNVPPTVQARQSIVNATANLGQSVTLVCDADGFPEPTMSWTKDGEPIENEEEDDEKHIFSDDSSELTIRNVDKNDEAEYVCIAENKAGEQDASIHLKVFAKPKITYVENQTAMELEEQVTLTCEASGDPIPSITWRTSTRNISSEEKTLDGHMVVRSHARVSSLTLKSIQYTDAGEYICTASNTIGQDSQSMYLEFQYAPKLQGPVAVYTWEGNQVNITCEVFAYPSATISWFRDGQLLPSSNYSNIKIYNTPSASYLEVTPDSENDFGNYNCTAVNRIGQESLEFILVQADTPSSPSIDRVEPYSSTAQVQFDEPEATGGVPILKYKAEWKSLGEESWHFKWYDAKEANMEGIVTIMGLKPETRYSVRLAALNGKGLGEISAATEFKTQPVREPSAPKLEGQMGEDGNSIKVNLIKQDDGGSPIRHYLVKYRALASEWKPEIRLPSGSDHVMLKSLDWNAEYEVYVVAENQQGKSKAAHFVFRTSAQPTAIPANGSPTAGLSTGAIVGILIVIFVLLLVVMDITCYFLNKCGLLMCIAVNLCGKAGPGAKGKDMEEGKAAFSKDESKEPIVEVRTEEERTPNHDGGKHTEPNETTPLTEPELPADTTATVEDMLPSVTTVTTNSDTITETFATAQNSPTSETTTLTSSIAPPATTVPDSNSVPAGQATPSKGVTASSSSPASAPKVAPLVDLSDTPTSAPSASNLSSTVLANQGAVLSPSTPASAGETSKAPPASKASPAPTPTPAGAASPLAAVAAPATDAPQAKQEAPSTKGPDPEPTQPGTVKNPPEAATAPASPKSKAATTNPSQGEDLKMDEGNFKTPDIDLAKDVFAALGSPRPATGASGQASELAPSPADSAVPPAPAKTEKGPVETKSEPPESEAKPAPTEVKTVPNDATQTKENESKA.

The N-terminal stretch at 1–19 (MLRTKDLIWTLFFLGTAVS) is a signal peptide. Ig-like C2-type domains follow at residues 20-111 (LQVD…ATVN), 116-205 (QKLM…KDIQ), 212-302 (PTVQ…ASIH), 309-402 (PKIT…MYLE), and 407-492 (PKLQ…ESLE). The Extracellular segment spans residues 20–711 (LQVDIVPSQG…NGSPTAGLST (692 aa)). Disulfide bonds link Cys41–Cys96 and Cys139–Cys189. Residues 152–156 (KHKGR) and 161–165 (KKDVR) contribute to the heparin site. Asn222 carries N-linked (GlcNAc...) asparagine; partial glycosylation. Cys235 and Cys288 form a disulfide bridge. N-linked (GlcNAc...) asparagine glycans are attached at residues Asn316, Asn348, Asn424, Asn450, and Asn479. An intrachain disulfide couples Cys330 to Cys386. Cysteines 427 and 480 form a disulfide. 2 Fibronectin type-III domains span residues 500-599 (TPSS…TQPV) and 601-696 (EPSA…SAQP). Thr706 carries the GPI-anchor amidated serine lipid modification. A helical transmembrane segment spans residues 712 to 729 (GAIVGILIVIFVLLLVVM). Residues 730–1115 (DITCYFLNKC…TQTKENESKA (386 aa)) lie on the Cytoplasmic side of the membrane. Disordered stretches follow at residues 756–809 (GAKG…TEPE), 839–912 (FATA…SASN), and 924–1115 (VLSP…ESKA). Basic and acidic residues predominate over residues 758 to 799 (KGKDMEEGKAAFSKDESKEPIVEVRTEEERTPNHDGGKHTEP). A phosphoserine mark is found at Ser770 and Ser774. Low complexity-rich tracts occupy residues 800–809 (NETTPLTEPE), 845–856 (SPTSETTTLTSS), and 876–896 (TPSKGVTASSSSPASAPKVAP). Phosphoserine is present on residues Ser887 and Ser890. Composition is skewed to polar residues over residues 902–912 (DTPTSAPSASN) and 926–935 (SPSTPASAGE). Ser926 is subject to Phosphoserine. Phosphothreonine is present on Thr929. Composition is skewed to low complexity over residues 936–974 (TSKAPPASKASPAPTPTPAGAASPLAAVAAPATDAPQAK) and 999–1012 (AATAPASPKSKAAT). Residues Ser946 and Ser958 each carry the phosphoserine modification. Thr1001 carries the phosphothreonine modification. Ser1005 bears the Phosphoserine mark. 2 stretches are compositionally biased toward basic and acidic residues: residues 1019-1037 (EDLKMDEGNFKTPDIDLAK) and 1074-1091 (KTEKGPVETKSEPPESEA). The residue at position 1030 (Thr1030) is a Phosphothreonine.

Interacts with MDK. Found in a complex with SLC39A6, SLC39A10 and with NCAM1; this complex controls NCAM1 phosphorylation and integration into focal adhesion complexes during epithelial-tomesenchymal transition. Interacts with synaptic plasticity regulator PANTS. Polysialylated by ST8SIA2 and ST8SIA4. Polysialylation modulates cell interactions by confering both attractive and repulsive properties that are highly regulated by ST8SIA2 and ST8SIA4. Polysialylation is formed on a-2,3-linked sialic acid of core glycans.

It is found in the cell membrane. Functionally, this protein is a cell adhesion molecule involved in neuron-neuron adhesion, neurite fasciculation, outgrowth of neurites, etc. The sequence is that of Neural cell adhesion molecule 1 from Mus musculus (Mouse).